Here is a 156-residue protein sequence, read N- to C-terminus: MPRKGPVARRDVLPDPIYNSKLVTRLINRIMVDGKRGTAQTILYNAFELVKERSGNDPMEVFDQALKNIMPVLEVKARRVGGSNYQVPIEVKPERRTTLGLRWLVNYARLRGEKTMEERLANEILDAANNAGAAVKKREDTHKMAEANKAFAHYRW.

The protein belongs to the universal ribosomal protein uS7 family. As to quaternary structure, part of the 30S ribosomal subunit. Contacts proteins S9 and S11.

Its function is as follows. One of the primary rRNA binding proteins, it binds directly to 16S rRNA where it nucleates assembly of the head domain of the 30S subunit. Is located at the subunit interface close to the decoding center, probably blocks exit of the E-site tRNA. The sequence is that of Small ribosomal subunit protein uS7 from Shouchella clausii (strain KSM-K16) (Alkalihalobacillus clausii).